Consider the following 412-residue polypeptide: O-acetyl-L-homoserine sulfhydrylase 2 (412 aa).

Residue Lys-202 is modified to N6-(pyridoxal phosphate)lysine.

Belongs to the trans-sulfuration enzymes family. As to quaternary structure, homotetramer. Pyridoxal 5'-phosphate is required as a cofactor.

It catalyses the reaction O-acetyl-L-homoserine + hydrogen sulfide = L-homocysteine + acetate. Inhibited by the carbonyl reagents hydroxylamine and phenylhydrazine. Also inhibited by methionine and propargylglycine. In terms of biological role, catalyzes the conversion of O-acetyl-L-homoserine (OAH) into homocysteine in the methionine biosynthesis pathway. Has weak activity with O-acetyl-L-serine, O-phospho-L-serine, L-serine, O-succinyl-L-homoserine and L-homoserine. Shows a very low CTT gamma-synthase activity. The polypeptide is O-acetyl-L-homoserine sulfhydrylase 2 (Thermus thermophilus (strain ATCC 27634 / DSM 579 / HB8)).